We begin with the raw amino-acid sequence, 501 residues long: Probable cytochrome P450 6a20 (501 aa).

Cysteine 445 contributes to the heme binding site.

It belongs to the cytochrome P450 family. It depends on heme as a cofactor.

It is found in the endoplasmic reticulum membrane. It localises to the microsome membrane. Its function is as follows. May be involved in the metabolism of insect hormones and in the breakdown of synthetic insecticides. The sequence is that of Probable cytochrome P450 6a20 (Cyp6a20) from Drosophila melanogaster (Fruit fly).